Consider the following 417-residue polypeptide: Zinc finger protein CONSTANS-LIKE 16 (417 aa).

The Zn(2+) site is built by Cys-17, Cys-20, Cys-40, and His-45. The B box-type; atypical zinc-finger motif lies at 17–59 (CDSCVKRRARWYCAADDAFLCQSCDSLVHSANPLARRHERVRL). The disordered stretch occupies residues 63 to 105 (SPAVVKHSNHSSASPPHEVATWHHGFTRKARTPRGSGKKNNSS). Residues 212–239 (LSNSEMFKIEKDEIEEEVEEIKAMSMDI) are a coiled coil. The CCT domain occupies 361-403 (REARVSRYREKRRTRLFSKKIRYEVRKLNAEKRPRMKGRFVKR).

This sequence belongs to the CONSTANS family.

The protein resides in the nucleus. The polypeptide is Zinc finger protein CONSTANS-LIKE 16 (COL16) (Arabidopsis thaliana (Mouse-ear cress)).